A 258-amino-acid polypeptide reads, in one-letter code: Glutamate racemase (258 aa).

Substrate-binding positions include 11–12 (DS) and 43–44 (YG). Catalysis depends on C74, which acts as the Proton donor/acceptor. 75-76 (NT) contacts substrate. Catalysis depends on C187, which acts as the Proton donor/acceptor. 188-189 (TH) serves as a coordination point for substrate.

This sequence belongs to the aspartate/glutamate racemases family.

The enzyme catalyses L-glutamate = D-glutamate. It functions in the pathway cell wall biogenesis; peptidoglycan biosynthesis. Provides the (R)-glutamate required for cell wall biosynthesis. The protein is Glutamate racemase of Bifidobacterium animalis subsp. lactis (strain AD011).